The primary structure comprises 376 residues: F-box/kelch-repeat protein At1g67480 (376 aa).

The 49-residue stretch at 37–85 folds into the F-box domain; it reads DPLIPGLPDDVAKQCLALVPRARFPSMGSVCKKWRFVVQSKEFITVRRL. Kelch repeat units follow at residues 139–189, 190–237, 239–289, and 291–335; these read KLLV…EVNG, HVYV…AFNG, LYVM…LFCI, and WKNH…LLFS.

In Arabidopsis thaliana (Mouse-ear cress), this protein is F-box/kelch-repeat protein At1g67480.